Reading from the N-terminus, the 119-residue chain is Ribonuclease P protein component (119 aa).

The protein belongs to the RnpA family. In terms of assembly, consists of a catalytic RNA component (M1 or rnpB) and a protein subunit.

The catalysed reaction is Endonucleolytic cleavage of RNA, removing 5'-extranucleotides from tRNA precursor.. RNaseP catalyzes the removal of the 5'-leader sequence from pre-tRNA to produce the mature 5'-terminus. It can also cleave other RNA substrates such as 4.5S RNA. The protein component plays an auxiliary but essential role in vivo by binding to the 5'-leader sequence and broadening the substrate specificity of the ribozyme. The sequence is that of Ribonuclease P protein component from Listeria welshimeri serovar 6b (strain ATCC 35897 / DSM 20650 / CCUG 15529 / CIP 8149 / NCTC 11857 / SLCC 5334 / V8).